We begin with the raw amino-acid sequence, 354 residues long: S-adenosylmethionine:tRNA ribosyltransferase-isomerase (354 aa).

This sequence belongs to the QueA family. In terms of assembly, monomer.

The protein localises to the cytoplasm. It catalyses the reaction 7-aminomethyl-7-carbaguanosine(34) in tRNA + S-adenosyl-L-methionine = epoxyqueuosine(34) in tRNA + adenine + L-methionine + 2 H(+). The protein operates within tRNA modification; tRNA-queuosine biosynthesis. In terms of biological role, transfers and isomerizes the ribose moiety from AdoMet to the 7-aminomethyl group of 7-deazaguanine (preQ1-tRNA) to give epoxyqueuosine (oQ-tRNA). The sequence is that of S-adenosylmethionine:tRNA ribosyltransferase-isomerase from Salmonella typhi.